A 324-amino-acid polypeptide reads, in one-letter code: D-erythronate dehydrogenase (324 aa).

Residues Ser-125, Tyr-149, and Lys-153 each contribute to the NAD(+) site. The active-site Proton acceptor is the Tyr-149.

It belongs to the NAD(P)-dependent epimerase/dehydratase family.

It carries out the reaction D-erythronate + NAD(+) = 2-dehydro-D-erythronate + NADH + H(+). In terms of biological role, catalyzes oxidation of D-erythronate to 2-oxo-tetronate. Can use either NAD(+) or NADP(+) as cosubstrate, with a preference for NAD(+). This is D-erythronate dehydrogenase from Cupriavidus necator (strain ATCC 17699 / DSM 428 / KCTC 22496 / NCIMB 10442 / H16 / Stanier 337) (Ralstonia eutropha).